Consider the following 565-residue polypeptide: Arginine--tRNA ligase (565 aa).

Positions 121–131 match the 'HIGH' region motif; that stretch reads PNIAKPMGMGH.

It belongs to the class-I aminoacyl-tRNA synthetase family. In terms of assembly, monomer.

The protein localises to the cytoplasm. The enzyme catalyses tRNA(Arg) + L-arginine + ATP = L-arginyl-tRNA(Arg) + AMP + diphosphate. This is Arginine--tRNA ligase from Lactobacillus delbrueckii subsp. bulgaricus (strain ATCC BAA-365 / Lb-18).